Reading from the N-terminus, the 140-residue chain is Small ribosomal subunit protein uS19 (140 aa).

This sequence belongs to the universal ribosomal protein uS19 family.

In terms of biological role, protein S19 forms a complex with S13 that binds strongly to the 16S ribosomal RNA. The chain is Small ribosomal subunit protein uS19 from Metallosphaera sedula (strain ATCC 51363 / DSM 5348 / JCM 9185 / NBRC 15509 / TH2).